A 72-amino-acid chain; its full sequence is Large ribosomal subunit protein uL29 (72 aa).

This sequence belongs to the universal ribosomal protein uL29 family.

The polypeptide is Large ribosomal subunit protein uL29 (Prochlorococcus marinus subsp. pastoris (strain CCMP1986 / NIES-2087 / MED4)).